Here is a 441-residue protein sequence, read N- to C-terminus: tRNA modification GTPase MnmE (441 aa).

Arg21, Glu79, and Lys118 together coordinate (6S)-5-formyl-5,6,7,8-tetrahydrofolate. A TrmE-type G domain is found at 214–367; the sequence is GIHITILGAP…LVAELARVVE (154 aa). Residues 224-229, 243-249, and 268-271 contribute to the GTP site; these read NAGKSS, SAQAGTT, and DTAG. 2 residues coordinate Mg(2+): Ser228 and Thr249. Residue Lys441 coordinates (6S)-5-formyl-5,6,7,8-tetrahydrofolate.

It belongs to the TRAFAC class TrmE-Era-EngA-EngB-Septin-like GTPase superfamily. TrmE GTPase family. Homodimer. Heterotetramer of two MnmE and two MnmG subunits. K(+) serves as cofactor.

It localises to the cytoplasm. Exhibits a very high intrinsic GTPase hydrolysis rate. Involved in the addition of a carboxymethylaminomethyl (cmnm) group at the wobble position (U34) of certain tRNAs, forming tRNA-cmnm(5)s(2)U34. The protein is tRNA modification GTPase MnmE of Paramagnetospirillum magneticum (strain ATCC 700264 / AMB-1) (Magnetospirillum magneticum).